Consider the following 46-residue polypeptide: Myoregulin (46 aa).

Over 1–21 (MTGKNWILISTTTPKSLEDEI) the chain is Cytoplasmic. Residues 22–42 (VGRLLKILFVIFVDLISIIYV) form a helical membrane-spanning segment. The Lumenal segment spans residues 43-46 (VITS).

In terms of assembly, homooligomer. Monomer. Interacts with ATP2A1/SERCA1. Interacts as a monomer with ATP2A2/SERCA2; the interaction inhibits ATP2A2 activity.

Its subcellular location is the sarcoplasmic reticulum membrane. In terms of biological role, inhibits the activity of ATP2A1/SERCA1 ATPase in sarcoplasmic reticulum by decreasing the apparent affinity of the ATPase for Ca(2+), thereby acting as a key regulator of skeletal muscle activity. Its high expression in adult skeletal muscle, suggests that it constitutes the predominant regulator of ATP2A1/SERCA1 in adult skeletal muscle. Also inhibits the activity of ATP2A2/SERCA2 and ATP2A3/SERCA3. The polypeptide is Myoregulin (Homo sapiens (Human)).